The primary structure comprises 233 residues: Adapter protein MecA (233 aa).

It belongs to the MecA family. In terms of assembly, homodimer.

In terms of biological role, enables the recognition and targeting of unfolded and aggregated proteins to the ClpC protease or to other proteins involved in proteolysis. This chain is Adapter protein MecA, found in Lactococcus lactis subsp. lactis (strain IL1403) (Streptococcus lactis).